Reading from the N-terminus, the 295-residue chain is Myosin light chain kinase A (295 aa).

Residues 8–265 enclose the Protein kinase domain; sequence YEFKEELGRG…ATNALNHPWL (258 aa). ATP-binding positions include 14–22 and K37; that span reads LGRGAFSIV. D130 (proton acceptor) is an active-site residue. Residues T166 and T289 each carry the phosphothreonine modification. An autoinhibitory domain region spans residues 264-295; sequence WLKSNNSNNTIDTVKMKEYIVERQKTQTKLVN.

The protein belongs to the protein kinase superfamily. CAMK Ser/Thr protein kinase family. CaMK subfamily. Autophosphorylated. Transiently phosphorylated on Thr-166 and Thr-289. This phosphorylation is gbpC-dependent.

It catalyses the reaction L-seryl-[myosin light chain] + ATP = O-phospho-L-seryl-[myosin light chain] + ADP + H(+). It carries out the reaction L-threonyl-[myosin light chain] + ATP = O-phospho-L-threonyl-[myosin light chain] + ADP + H(+). Possesses an autoinhibitory domain. Autophosphorylation appears to increase the enzymatic activity. Activation is gbdC-dependent. Does not have a calmodulin-binding domain. Its function is as follows. Phosphorylates a specific serine in the N-terminus of a myosin light chain. Phosphorylates regulatory myosin light chain (mlcR) during chemotaxis. mlcR phosphorylation increases the motility and actin-activated ATPase activity of myosin, contributing to chemotaxis. The polypeptide is Myosin light chain kinase A (mlkA) (Dictyostelium discoideum (Social amoeba)).